The following is a 448-amino-acid chain: MQINSSWQERFLADPPREKDHRPPFRRDRGRILHSAAFRCLQAKTQIHAIGENDFYRTRLTHSLEVAQIGSSIVAQMKLIDSFIYLAQQLKEDRADLQKQLKLILPSNDLIESLCFAHDIGHPPFGHGGEVALNYMMRHHGGFEGNAQTFRLLTKLEPYTPNAGMNLTRRTLLGVVKYPTILDRSSPQYHQGVIVDNVDSKYVKISAWKPGKGIFRDDLKMFEWLLEPLSENDRTLFGQYKKERTRPDEVLKTRYKSLDCSIMELADDIAYAVHDLEDAIVVGVVTFQQWQSAVEKLAECRSEWIVQTISSLSQKLFSELHYERKNAIGALVNYFITHVRWKINNGFSEPLLRYNAELPDEVIEVLNIFKRFVWEYVIKHVDTQRVEYKGQRMLTEMFQIFDSDPLRLLPRNTAMRWQKATETDRKRIICDYIAGMSDAYALRVYQQL.

Positions 1 to 26 (MQINSSWQERFLADPPREKDHRPPFR) are disordered. The segment covering 11–26 (FLADPPREKDHRPPFR) has biased composition (basic and acidic residues). Residues 59–272 (RLTHSLEVAQ…MELADDIAYA (214 aa)) enclose the HD domain.

Belongs to the dGTPase family. Type 2 subfamily.

This chain is Deoxyguanosinetriphosphate triphosphohydrolase-like protein, found in Histophilus somni (strain 129Pt) (Haemophilus somnus).